Consider the following 231-residue polypeptide: 7-cyano-7-deazaguanine synthase (231 aa).

8-18 (FSGGQDSTTCL) lines the ATP pocket. Residues C188, C197, C200, and C203 each contribute to the Zn(2+) site.

The protein belongs to the QueC family. Requires Zn(2+) as cofactor.

It carries out the reaction 7-carboxy-7-deazaguanine + NH4(+) + ATP = 7-cyano-7-deazaguanine + ADP + phosphate + H2O + H(+). It functions in the pathway purine metabolism; 7-cyano-7-deazaguanine biosynthesis. Its function is as follows. Catalyzes the ATP-dependent conversion of 7-carboxy-7-deazaguanine (CDG) to 7-cyano-7-deazaguanine (preQ(0)). In Escherichia coli (strain SMS-3-5 / SECEC), this protein is 7-cyano-7-deazaguanine synthase.